A 398-amino-acid polypeptide reads, in one-letter code: Bifunctional enzyme IspD/IspF (398 aa).

The 2-C-methyl-D-erythritol 4-phosphate cytidylyltransferase stretch occupies residues 1–234 (MPSSKRTAAI…ARLAAALGDI (234 aa)). A 2-C-methyl-D-erythritol 2,4-cyclodiphosphate synthase region spans residues 235-398 (RTGTGYDVHA…LPWNDKGRDT (164 aa)). 2 residues coordinate a divalent metal cation: D241 and H243. Residues 241 to 243 (DVH) and 267 to 268 (HS) each bind 4-CDP-2-C-methyl-D-erythritol 2-phosphate. H275 contributes to the a divalent metal cation binding site. 4-CDP-2-C-methyl-D-erythritol 2-phosphate contacts are provided by residues 289 to 291 (DIG), 365 to 368 (TTSE), F372, and R375.

In the N-terminal section; belongs to the IspD/TarI cytidylyltransferase family. IspD subfamily. It in the C-terminal section; belongs to the IspF family. It depends on a divalent metal cation as a cofactor.

It catalyses the reaction 2-C-methyl-D-erythritol 4-phosphate + CTP + H(+) = 4-CDP-2-C-methyl-D-erythritol + diphosphate. It carries out the reaction 4-CDP-2-C-methyl-D-erythritol 2-phosphate = 2-C-methyl-D-erythritol 2,4-cyclic diphosphate + CMP. It participates in isoprenoid biosynthesis; isopentenyl diphosphate biosynthesis via DXP pathway; isopentenyl diphosphate from 1-deoxy-D-xylulose 5-phosphate: step 2/6. It functions in the pathway isoprenoid biosynthesis; isopentenyl diphosphate biosynthesis via DXP pathway; isopentenyl diphosphate from 1-deoxy-D-xylulose 5-phosphate: step 4/6. In terms of biological role, bifunctional enzyme that catalyzes the formation of 4-diphosphocytidyl-2-C-methyl-D-erythritol from CTP and 2-C-methyl-D-erythritol 4-phosphate (MEP) (IspD), and catalyzes the conversion of 4-diphosphocytidyl-2-C-methyl-D-erythritol 2-phosphate (CDP-ME2P) to 2-C-methyl-D-erythritol 2,4-cyclodiphosphate (ME-CPP) with a corresponding release of cytidine 5-monophosphate (CMP) (IspF). The polypeptide is Bifunctional enzyme IspD/IspF (Nitrobacter winogradskyi (strain ATCC 25391 / DSM 10237 / CIP 104748 / NCIMB 11846 / Nb-255)).